Here is a 357-residue protein sequence, read N- to C-terminus: Non-structural protein NS2 (357 aa).

2 disordered regions span residues 169 to 191 (PRLQVHSVAPREESRWMDDDEAK) and 229 to 266 (DERDEGDRDERGDEEQVKTLSDDDDQGEDASDDEHPKT). Residues 233–249 (EGDRDERGDEEQVKTLS) are compositionally biased toward basic and acidic residues. Positions 250-260 (DDDDQGEDASD) are enriched in acidic residues.

This sequence belongs to the orbivirus non-structural protein NS2 family.

Single-stranded RNA-binding protein. The chain is Non-structural protein NS2 (Segment-8) from Antilocapra americana (Pronghorn).